A 142-amino-acid chain; its full sequence is Transcription antitermination protein NusB (142 aa).

It belongs to the NusB family.

Involved in transcription antitermination. Required for transcription of ribosomal RNA (rRNA) genes. Binds specifically to the boxA antiterminator sequence of the ribosomal RNA (rrn) operons. This is Transcription antitermination protein NusB from Anaeromyxobacter dehalogenans (strain 2CP-1 / ATCC BAA-258).